The sequence spans 141 residues: HTH-type transcriptional repressor NsrR (141 aa).

The 128-residue stretch at Gln2–Glu129 folds into the HTH rrf2-type domain. Positions Ile28–Arg51 form a DNA-binding region, H-T-H motif. Cys91, Cys96, and Cys102 together coordinate [2Fe-2S] cluster.

[2Fe-2S] cluster is required as a cofactor.

Functionally, nitric oxide-sensitive repressor of genes involved in protecting the cell against nitrosative stress. May require iron for activity. The protein is HTH-type transcriptional repressor NsrR of Escherichia coli O127:H6 (strain E2348/69 / EPEC).